Consider the following 272-residue polypeptide: Cyclase-like protein 2 (272 aa).

A signal peptide spans Met1–Ala24.

The protein belongs to the Cyclase 1 superfamily.

It is found in the secreted. The protein localises to the extracellular space. It localises to the extracellular matrix. Its function is as follows. May function redundantly with CYCLASE1 for normal plant growth, development and viability. This is Cyclase-like protein 2 from Arabidopsis thaliana (Mouse-ear cress).